Reading from the N-terminus, the 115-residue chain is Phosphoribosyl-AMP cyclohydrolase (115 aa).

Asp-80 lines the Mg(2+) pocket. Cys-81 serves as a coordination point for Zn(2+). Mg(2+) contacts are provided by Asp-82 and Asp-84. Zn(2+) is bound by residues Cys-97 and Cys-104.

Belongs to the PRA-CH family. In terms of assembly, homodimer. It depends on Mg(2+) as a cofactor. Zn(2+) serves as cofactor.

Its subcellular location is the cytoplasm. The catalysed reaction is 1-(5-phospho-beta-D-ribosyl)-5'-AMP + H2O = 1-(5-phospho-beta-D-ribosyl)-5-[(5-phospho-beta-D-ribosylamino)methylideneamino]imidazole-4-carboxamide. Its pathway is amino-acid biosynthesis; L-histidine biosynthesis; L-histidine from 5-phospho-alpha-D-ribose 1-diphosphate: step 3/9. Functionally, catalyzes the hydrolysis of the adenine ring of phosphoribosyl-AMP. The protein is Phosphoribosyl-AMP cyclohydrolase of Mycobacterium leprae (strain Br4923).